The primary structure comprises 248 residues: UPF0246 protein MYPE6270 (248 aa).

Belongs to the UPF0246 family.

The protein is UPF0246 protein MYPE6270 of Malacoplasma penetrans (strain HF-2) (Mycoplasma penetrans).